The primary structure comprises 593 residues: Efflux pump FUB11 (593 aa).

The tract at residues 1 to 45 (MAIDPQPSSPSLSSETIANDTIGNDNNVNEPSVEPKTQEHQHTVP) is disordered. Residues 9 to 30 (SPSLSSETIANDTIGNDNNVNE) show a composition bias toward polar residues. Asn19 carries N-linked (GlcNAc...) asparagine glycosylation. Transmembrane regions (helical) follow at residues 98–118 (WAFV…SSAY), 135–155 (VATL…LVWA), 167–187 (FFFT…AGSI), 195–215 (FLTG…IADM), 227–247 (MFSG…GFLG), 254–274 (WLHG…TVFI), 337–357 (IYIS…PIVF), 367–387 (IGGL…ISFA), 410–430 (LPPA…FAWT), 438–458 (IVPI…FMAL), 468–488 (IFAA…GAAF), and 503–523 (WASS…FLFY). The disordered stretch occupies residues 570–593 (THNSHASAAHSHGHRRSLSYTRSA).

Belongs to the major facilitator superfamily. DHA1 family. Polyamines/proton antiporter (TC 2.A.1.2.16) subfamily.

Its subcellular location is the cell membrane. Efflux pump involved in export of fusaric acid, a mycotoxin with low to moderate toxicity to animals and humans, but with high phytotoxic properties. Constitutes a self-protecting mechanism of the fungus against critical levels of FSA within the cell. In Gibberella moniliformis (strain M3125 / FGSC 7600) (Maize ear and stalk rot fungus), this protein is Efflux pump FUB11.